The chain runs to 197 residues: Predicted GPI-anchored protein 34 (197 aa).

Residues 1-20 (MKFTSLICSSILLIIPTVMA) form the signal peptide. 3 N-linked (GlcNAc...) asparagine glycosylation sites follow: N110, N114, and N152. G169 is lipidated: GPI-anchor amidated glycine. A propeptide spans 170 to 197 (AAAMAGPVPILTNSIFTAGLLALAAVLL) (removed in mature form).

The protein resides in the cell membrane. Predicted GPI-anchored protein which may have a role during host infection. The protein is Predicted GPI-anchored protein 34 (PGA34) of Candida albicans (strain SC5314 / ATCC MYA-2876) (Yeast).